Consider the following 355-residue polypeptide: UDP-N-acetylglucosamine--N-acetylmuramyl-(pentapeptide) pyrophosphoryl-undecaprenol N-acetylglucosamine transferase (355 aa).

UDP-N-acetyl-alpha-D-glucosamine is bound by residues 15 to 17, Asn127, Arg163, Ser191, Ile245, 264 to 269, and Gln289; these read TGG and ALTVSE.

The protein belongs to the glycosyltransferase 28 family. MurG subfamily.

The protein resides in the cell inner membrane. The catalysed reaction is di-trans,octa-cis-undecaprenyl diphospho-N-acetyl-alpha-D-muramoyl-L-alanyl-D-glutamyl-meso-2,6-diaminopimeloyl-D-alanyl-D-alanine + UDP-N-acetyl-alpha-D-glucosamine = di-trans,octa-cis-undecaprenyl diphospho-[N-acetyl-alpha-D-glucosaminyl-(1-&gt;4)]-N-acetyl-alpha-D-muramoyl-L-alanyl-D-glutamyl-meso-2,6-diaminopimeloyl-D-alanyl-D-alanine + UDP + H(+). The protein operates within cell wall biogenesis; peptidoglycan biosynthesis. Functionally, cell wall formation. Catalyzes the transfer of a GlcNAc subunit on undecaprenyl-pyrophosphoryl-MurNAc-pentapeptide (lipid intermediate I) to form undecaprenyl-pyrophosphoryl-MurNAc-(pentapeptide)GlcNAc (lipid intermediate II). This chain is UDP-N-acetylglucosamine--N-acetylmuramyl-(pentapeptide) pyrophosphoryl-undecaprenol N-acetylglucosamine transferase, found in Yersinia enterocolitica serotype O:8 / biotype 1B (strain NCTC 13174 / 8081).